Consider the following 190-residue polypeptide: Adenylate kinase (190 aa).

Residue 12-17 (GSGKTT) coordinates ATP. The NMP stretch occupies residues 33–62 (STGDLLRAEVASGSELGKTIDSFISKGNLV). AMP is bound by residues threonine 34, arginine 39, 60-62 (NLV), 87-90 (GYPR), and glutamine 94. The interval 129 to 135 (GRARGAD) is LID. Arginine 130 contributes to the ATP binding site. AMP is bound by residues arginine 132 and arginine 144. Arginine 172 serves as a coordination point for ATP.

This sequence belongs to the adenylate kinase family. In terms of assembly, monomer.

The protein localises to the cytoplasm. It carries out the reaction AMP + ATP = 2 ADP. It functions in the pathway purine metabolism; AMP biosynthesis via salvage pathway; AMP from ADP: step 1/1. In terms of biological role, catalyzes the reversible transfer of the terminal phosphate group between ATP and AMP. Plays an important role in cellular energy homeostasis and in adenine nucleotide metabolism. This is Adenylate kinase from Campylobacter lari (strain RM2100 / D67 / ATCC BAA-1060).